The sequence spans 378 residues: N-acetyldiaminopimelate deacetylase (378 aa).

Asp-65 is an active-site residue. Glu-124 serves as the catalytic Proton acceptor.

Belongs to the peptidase M20A family. N-acetyldiaminopimelate deacetylase subfamily.

It carries out the reaction N-acetyl-(2S,6S)-2,6-diaminopimelate + H2O = (2S,6S)-2,6-diaminopimelate + acetate. It participates in amino-acid biosynthesis; L-lysine biosynthesis via DAP pathway; LL-2,6-diaminopimelate from (S)-tetrahydrodipicolinate (acetylase route): step 3/3. Its function is as follows. Catalyzes the conversion of N-acetyl-diaminopimelate to diaminopimelate and acetate. The polypeptide is N-acetyldiaminopimelate deacetylase (Anoxybacillus flavithermus (strain DSM 21510 / WK1)).